Consider the following 141-residue polypeptide: MKKVAIVGALLVLAGCAEVENYNDVVKTPAPAGLEGYWQSKGPQRKLVSPEAIASLVVTKEGDTLDCRQWQRVIALPGKLTMLSDDLTNVTVKRELYEIERDGNTLEYDGMTLQRVARPTPECAAALEKTPLPTPLPTPLP.

Positions 1 to 15 (MKKVAIVGALLVLAG) are cleaved as a signal peptide. Residue Cys-16 is the site of N-palmitoyl cysteine attachment. Residue Cys-16 is the site of S-diacylglycerol cysteine attachment.

It localises to the cell membrane. This is an uncharacterized protein from Salmonella typhimurium (strain LT2 / SGSC1412 / ATCC 700720).